The sequence spans 498 residues: Angiopoietin-4 (498 aa).

The N-terminal stretch at 1 to 22 (MPSPPAMLLGGLLLIVASTTVA) is a signal peptide. The disordered stretch occupies residues 51–80 (EPEPCPPEPEAFGGSNSLQRDSPAATLNLG). A coiled-coil region spans residues 85-109 (QRMRQLEKMLENNTQWLQKLERYIQ). N-linked (GlcNAc...) asparagine glycans are attached at residues Asn-96, Asn-126, Asn-158, Asn-247, Asn-295, Asn-306, Asn-332, and Asn-424. Residues 186–254 (HELHRLQGHN…SSNSSLLQRQ (69 aa)) are a coiled coil. Residues 277–497 (RAADQLFQDC…TTRMMVRPSG (221 aa)) form the Fibrinogen C-terminal domain. Cys-286 and Cys-315 are oxidised to a cystine. Cysteines 439 and 452 form a disulfide.

As to quaternary structure, homodimer; disulfide-linked. Interacts with TEK/TIE2.

It is found in the secreted. In terms of biological role, binds to TEK/TIE2, modulating ANGPT1 signaling. Can induce tyrosine phosphorylation of TEK/TIE2. Promotes endothelial cell survival, migration and angiogenesis. The sequence is that of Angiopoietin-4 (ANGPT4) from Bos taurus (Bovine).